Consider the following 208-residue polypeptide: Probable splicing factor, arginine/serine-rich 5 (208 aa).

The region spanning 2–74 (PRLYLGKIPY…MRLVVEMARG (73 aa)) is the RRM domain. The tract at residues 71–208 (MARGKPRGND…RSPSPGSPKD (138 aa)) is disordered. Residues 84-123 (SRSPRRRSRSPRRRSRTPPRRRSRSRDRKRSRRSRSRSSS) show a composition bias toward basic residues. The segment covering 128–153 (PVRESRRRSESRSPSPKRDLKREASR) has biased composition (basic and acidic residues).

The protein belongs to the splicing factor SR family. Extensively phosphorylated on serine residues in the RS domain.

It is found in the nucleus. Its function is as follows. Plays a functionally redundant role in shifting germ cell sexual differentiation in hermaphrodites. In Caenorhabditis elegans, this protein is Probable splicing factor, arginine/serine-rich 5 (rsp-5).